An 846-amino-acid chain; its full sequence is Enhancer of polycomb-like protein 1 (846 aa).

Disordered regions lie at residues 169–204, 391–466, 587–607, 682–702, and 759–804; these read FNSK…KGDA, TSDE…APDA, EKKR…QSPK, AADA…PQPN, and QVQA…GVKQ. Over residues 180–203 the composition is skewed to basic and acidic residues; it reads VKSDKEQGRGMRVKGKDREKEKGD. A compositionally biased stretch (polar residues) spans 411–426; sequence PSLSGQTPLTSGQSSS. Residues 432–452 are compositionally biased toward basic and acidic residues; the sequence is TDKDREERAQRERYDAQRNAE. The stretch at 434–490 forms a coiled coil; that stretch reads KDREERAQRERYDAQRNAERSGILSGRSNAPDALKERLQALQQKTEEMLARKKEQDA. A compositionally biased stretch (pro residues) spans 686 to 702; that stretch reads KPPPAPIFQKPPAPQPN. A compositionally biased stretch (low complexity) spans 759–773; it reads QVQAQGQGHPQAHLQ. The segment covering 783–796 has biased composition (polar residues); it reads NGVNSPMPNGQQML.

The protein belongs to the enhancer of polycomb family. In terms of assembly, component of the NuA4 histone acetyltransferase complex.

Its subcellular location is the nucleus. Component of the NuA4 histone acetyltransferase complex which is involved in transcriptional activation of selected genes principally by acetylation of nucleosomal histone H4 and H2A. The NuA4 complex is also involved in DNA repair. Involved in gene silencing by neighboring heterochromatin, blockage of the silencing spreading along the chromosome, and required for cell cycle progression through G2/M. The protein is Enhancer of polycomb-like protein 1 (EPL1) of Cryptococcus neoformans var. neoformans serotype D (strain JEC21 / ATCC MYA-565) (Filobasidiella neoformans).